We begin with the raw amino-acid sequence, 291 residues long: Lipase (291 aa).

The signal sequence occupies residues 1 to 17 (MRSSLVLFFVSAWTALA). Positions 18–22 (SPIRR) are excised as a propeptide. 3 cysteine pairs are disulfide-bonded: Cys44/Cys290, Cys58/Cys63, and Cys126/Cys129. Ser168 functions as the Nucleophile in the catalytic mechanism. Residues Asp223 and His280 each act as charge relay system in the active site.

The protein belongs to the AB hydrolase superfamily. Lipase family.

The enzyme catalyses a triacylglycerol + H2O = a diacylglycerol + a fatty acid + H(+). This chain is Lipase (LIP), found in Thermomyces lanuginosus (Humicola lanuginosa).